The following is a 98-amino-acid chain: Small ribosomal subunit protein bS20 (98 aa).

The span at 1-12 shows a compositional bias: basic residues; it reads MAPRKPSKKVGP. Positions 1–34 are disordered; sequence MAPRKPSKKVGPQKRPSAEKRVITSKKKQLRNQS.

It belongs to the bacterial ribosomal protein bS20 family.

Its function is as follows. Binds directly to 16S ribosomal RNA. The chain is Small ribosomal subunit protein bS20 from Chlamydia muridarum (strain MoPn / Nigg).